We begin with the raw amino-acid sequence, 429 residues long: GTPase Obg (429 aa).

The region spanning M1–L158 is the Obg domain. Residues R124–P145 form a disordered region. The 171-residue stretch at A159–E329 folds into the OBG-type G domain. GTP contacts are provided by residues G165–S172, F190–V194, D212–G215, N282–D285, and S310–V312. S172 and T192 together coordinate Mg(2+). Residues K351–D429 form the OCT domain.

It belongs to the TRAFAC class OBG-HflX-like GTPase superfamily. OBG GTPase family. In terms of assembly, monomer. Requires Mg(2+) as cofactor.

It localises to the cytoplasm. Its function is as follows. An essential GTPase which binds GTP, GDP and possibly (p)ppGpp with moderate affinity, with high nucleotide exchange rates and a fairly low GTP hydrolysis rate. Plays a role in control of the cell cycle, stress response, ribosome biogenesis and in those bacteria that undergo differentiation, in morphogenesis control. This Listeria welshimeri serovar 6b (strain ATCC 35897 / DSM 20650 / CCUG 15529 / CIP 8149 / NCTC 11857 / SLCC 5334 / V8) protein is GTPase Obg.